Reading from the N-terminus, the 171-residue chain is ATP synthase subunit b (171 aa).

A helical transmembrane segment spans residues 32-52 (FFAVLLIFLIVLGVIAKWVVP).

It belongs to the ATPase B chain family. F-type ATPases have 2 components, F(1) - the catalytic core - and F(0) - the membrane proton channel. F(1) has five subunits: alpha(3), beta(3), gamma(1), delta(1), epsilon(1). F(0) has three main subunits: a(1), b(2) and c(10-14). The alpha and beta chains form an alternating ring which encloses part of the gamma chain. F(1) is attached to F(0) by a central stalk formed by the gamma and epsilon chains, while a peripheral stalk is formed by the delta and b chains.

It is found in the cell membrane. In terms of biological role, f(1)F(0) ATP synthase produces ATP from ADP in the presence of a proton or sodium gradient. F-type ATPases consist of two structural domains, F(1) containing the extramembraneous catalytic core and F(0) containing the membrane proton channel, linked together by a central stalk and a peripheral stalk. During catalysis, ATP synthesis in the catalytic domain of F(1) is coupled via a rotary mechanism of the central stalk subunits to proton translocation. Component of the F(0) channel, it forms part of the peripheral stalk, linking F(1) to F(0). In Mycolicibacterium gilvum (strain PYR-GCK) (Mycobacterium gilvum (strain PYR-GCK)), this protein is ATP synthase subunit b.